We begin with the raw amino-acid sequence, 64 residues long: Neuropeptide-like 4 (64 aa).

The N-terminal stretch at Met1–Ala18 is a signal peptide. 2 propeptides span residues Val19 to Pro40 and Tyr63 to Gly64.

The protein resides in the secreted. This is Neuropeptide-like 4 (Nplp4) from Drosophila melanogaster (Fruit fly).